The chain runs to 397 residues: UDP-GlcNAc:betaGal beta-1,3-N-acetylglucosaminyltransferase 8 (397 aa).

The Cytoplasmic portion of the chain corresponds to 1 to 6 (MRCPKC). Residues 7–23 (LLCLSALLTLLGLKVYI) traverse the membrane as a helical; Signal-anchor for type II membrane protein segment. The Lumenal segment spans residues 24-397 (EWTSESRLSK…KQLQDPRLQC (374 aa)). Residues 33-58 (KAYPSPRGTPPSPTPANPEPTLPANL) are disordered. The segment covering 39–53 (RGTPPSPTPANPEPT) has biased composition (pro residues). Asn57 is a glycosylation site (N-linked (GlcNAc...) asparagine).

This sequence belongs to the glycosyltransferase 31 family. As to quaternary structure, interacts with B3GNT2; this interaction greatly increases B3GNT2 catalytic activity, independently of B3GNT8 enzymatic activity. As to expression, highly expressed in small intestine, pancreas, spleen, bone marrow, lung, throat, and ileum, and weakly in fetal brain, cerebellum, heart, liver, tongue, breast, uteri, and testis. Not detected in colon. Differentially expressed in human tumor cell lines.

It is found in the golgi apparatus membrane. It functions in the pathway protein modification; protein glycosylation. In terms of biological role, beta-1,3-N-acetylglucosaminyltransferase that plays a role in the elongation of specific branch structures of multiantennary N-glycans. Has strong activity towards tetraantennary N-glycans and 2,6 triantennary glycans. This Homo sapiens (Human) protein is UDP-GlcNAc:betaGal beta-1,3-N-acetylglucosaminyltransferase 8.